Consider the following 341-residue polypeptide: Phospholipid phosphatase homolog 1.2 homolog (341 aa).

The next 3 helical transmembrane spans lie at 30–50 (LFIF…LLGV), 71–91 (ITAV…VLFV), and 122–142 (LLTY…LNIV). N162 is a glycosylation site (N-linked (GlcNAc...) asparagine). The next 2 membrane-spanning stretches (helical) occupy residues 223-243 (RIVV…ISFS) and 257-277 (VGIF…TDLF). Disordered stretches follow at residues 284–308 (SETQ…ERHR) and 322–341 (FEAT…PQSA). The span at 299–308 (RNSEDEERHR) shows a compositional bias: basic and acidic residues.

The protein belongs to the PA-phosphatase related phosphoesterase family.

The protein resides in the membrane. The chain is Phospholipid phosphatase homolog 1.2 homolog from Caenorhabditis elegans.